Here is a 997-residue protein sequence, read N- to C-terminus: P3N-PIPO polyprotein (997 aa).

The Peptidase S30 domain occupies 173–313 (IVCVDDVNNL…VLFYSDVEHY (141 aa)). Residues Glu-235 and Ser-267 each act as for P1 proteinase activity in the active site. The Involved in interaction with stylet and aphid transmission motif lies at 365–368 (KLSC). Residues 621–623 (PTK) carry the Involved in virions binding and aphid transmission motif. The Peptidase C6 domain maps to 647–769 (MYIAKEGYCY…QSEMKHYRVG (123 aa)). Catalysis depends on for helper component proteinase activity residues Cys-655 and His-728.

The protein belongs to the potyviridae P3N-PIPO polyprotein family. Interacts (via PIPO domain) with host PCaP1 protein; this interaction may help to anchor the movement complex to the plasma membrane from which the complex could move to the plasmodesmata. In terms of processing, potyviral RNA is expressed as two polyproteins which undergo post-translational proteolytic processing. Genome polyprotein is processed by NIa-pro, P1 and HC-pro proteinases resulting in the production of at least ten individual proteins. P3N-PIPO is cleaved by P1 and HC-pro proteinases resulting in the production of three individual proteins. The P1 proteinase and the HC-pro cleave only their respective C-termini autocatalytically.

It localises to the host cell junction. The protein resides in the host plasmodesma. It catalyses the reaction Hydrolyzes a Gly-|-Gly bond at its own C-terminus, commonly in the sequence -Tyr-Xaa-Val-Gly-|-Gly, in the processing of the potyviral polyprotein.. Functionally, required for aphid transmission and also has proteolytic activity. Only cleaves a Gly-Gly dipeptide at its own C-terminus. Interacts with virions and aphid stylets. Acts as a suppressor of RNA-mediated gene silencing, also known as post-transcriptional gene silencing (PTGS), a mechanism of plant viral defense that limits the accumulation of viral RNAs. May have RNA-binding activity. In terms of biological role, allows efficient cell to cell propagation, by bypassing the host cell wall barrier. Transports viral genome to neighboring plant cells directly through plasmosdesmata, without any budding. The sequence is that of P3N-PIPO polyprotein from Citrullus lanatus (Watermelon).